A 176-amino-acid polypeptide reads, in one-letter code: MKPLIMLICFAVILLQLGVTKVCQHNEVQLGNECCPPCGSGQRVTKVCTDYTSVTCTPCPNGTYVSGLYNCTDCTQCNVTQVMIRNCTSTNNTVCAPKNHTYFSTPGVQHHKQRQQNHTAHITVKQGKSGRHTLAWLSLFIFLVGIILLILYLIAAYRSERCQQCCSIGKIFYRTL.

The first 20 residues, 1–20 (MKPLIMLICFAVILLQLGVT), serve as a signal peptide directing secretion. TNFR-Cys repeat units follow at residues 22-56 (VCQH…SVTC) and 58-95 (PCPN…NTVC). 6 cysteine pairs are disulfide-bonded: Cys-23-Cys-34, Cys-35-Cys-48, Cys-38-Cys-56, Cys-59-Cys-71, Cys-74-Cys-87, and Cys-77-Cys-95. The helical transmembrane segment at 134–154 (LAWLSLFIFLVGIILLILYLI) threads the bilayer.

In terms of assembly, interacts with host TRIM23; this interaction causes auto-ubiquitination of TRAF6, leading to NF-kappaB activation.

It is found in the membrane. Its function is as follows. Activates NF-kappaB in a tumor necrosis factor receptor (TNFR)-associated factor 6 (TRAF6)-dependent manner, causing the up-regulation of the chemokine CCL22. The protein is Membrane glycoprotein UL144 (UL144) of Homo sapiens (Human).